Consider the following 249-residue polypeptide: Diphthine synthase (249 aa).

S-adenosyl-L-methionine-binding positions include Asp83, Leu86, 111–112 (SI), Leu163, and Leu205.

It belongs to the diphthine synthase family. Homodimer.

It carries out the reaction 2-[(3S)-amino-3-carboxypropyl]-L-histidyl-[translation elongation factor 2] + 3 S-adenosyl-L-methionine = diphthine-[translation elongation factor 2] + 3 S-adenosyl-L-homocysteine + 3 H(+). It participates in protein modification; peptidyl-diphthamide biosynthesis. In terms of biological role, S-adenosyl-L-methionine-dependent methyltransferase that catalyzes the trimethylation of the amino group of the modified target histidine residue in translation elongation factor 2 (EF-2), to form an intermediate called diphthine. The three successive methylation reactions represent the second step of diphthamide biosynthesis. This chain is Diphthine synthase, found in Pyrobaculum islandicum (strain DSM 4184 / JCM 9189 / GEO3).